Consider the following 309-residue polypeptide: Golgi to ER traffic protein 4 homolog (309 aa).

The tract at residues 290–309 (SGGGLASMEVDGPTIEDEMD) is disordered.

This sequence belongs to the GET4 family.

Its function is as follows. May play a role in insertion of tail-anchored proteins into the endoplasmic reticulum membrane. The sequence is that of Golgi to ER traffic protein 4 homolog from Dictyostelium discoideum (Social amoeba).